Here is a 715-residue protein sequence, read N- to C-terminus: Polyribonucleotide nucleotidyltransferase (715 aa).

Asp-500 and Asp-506 together coordinate Mg(2+). The region spanning 567 to 634 is the KH domain; it reads PKVKMIRINP…AYIESLVREA (68 aa). The 76-residue stretch at 637 to 712 folds into the S1 motif domain; sequence GELYEAKVTR…ERGRVDLSRK (76 aa).

This sequence belongs to the polyribonucleotide nucleotidyltransferase family. It depends on Mg(2+) as a cofactor.

The protein resides in the cytoplasm. The catalysed reaction is RNA(n+1) + phosphate = RNA(n) + a ribonucleoside 5'-diphosphate. Its function is as follows. Involved in mRNA degradation. Catalyzes the phosphorolysis of single-stranded polyribonucleotides processively in the 3'- to 5'-direction. The protein is Polyribonucleotide nucleotidyltransferase of Acholeplasma laidlawii (strain PG-8A).